Here is a 317-residue protein sequence, read N- to C-terminus: Fe-S cluster assembly protein DRE2 (317 aa).

The tract at residues 1–131 (MERMLFLSPP…KPNFGAQDTV (131 aa)) is N-terminal SAM-like domain. A linker region spans residues 132–209 (PLKLGKKKKA…EEALMDEEDM (78 aa)). Cys-219, Cys-230, Cys-233, and Cys-235 together coordinate [2Fe-2S] cluster. The interval 219 to 235 (CRPKAGKRRRACKDCTC) is fe-S binding site A. Residues Cys-280, Cys-283, Cys-291, and Cys-294 each coordinate [4Fe-4S] cluster. 2 short sequence motifs (cx2C motif) span residues 280 to 283 (CGNC) and 291 to 294 (CDGC). The segment at 280-294 (CGNCALGDAFRCDGC) is fe-S binding site B.

Belongs to the anamorsin family. As to quaternary structure, monomer. Interacts with TAH18. Interacts with MIA40. It depends on [2Fe-2S] cluster as a cofactor. [4Fe-4S] cluster is required as a cofactor.

Its subcellular location is the cytoplasm. It is found in the mitochondrion intermembrane space. In terms of biological role, component of the cytosolic iron-sulfur (Fe-S) protein assembly (CIA) machinery required for the maturation of extramitochondrial Fe-S proteins. Part of an electron transfer chain functioning in an early step of cytosolic Fe-S biogenesis, facilitating the de novo assembly of a [4Fe-4S] cluster on the scaffold complex CFD1-NBP35. Electrons are transferred to DRE2 from NADPH via the FAD- and FMN-containing protein TAH18. TAH18-DRE2 are also required for the assembly of the diferric tyrosyl radical cofactor of ribonucleotide reductase (RNR), probably by providing electrons for reduction during radical cofactor maturation in the catalytic small subunit RNR2. The sequence is that of Fe-S cluster assembly protein DRE2 from Uncinocarpus reesii (strain UAMH 1704).